The primary structure comprises 219 residues: Lipid transferase CIDEB (219 aa).

At Thr-18 the chain carries Phosphothreonine. Positions 34 to 110 (PQRPFRVCDH…VLEQGQSWSP (77 aa)) constitute a CIDE-N domain.

Belongs to the CIDE family. Interacts with DFFA. Interacts with DFFB; inhibited by DFFB. Interacts with APOB. Interacts with PREB/SEC12; facilitating loading of SCAP-SREBP into COPII vesicles. Highly enriched in the liver.

The protein localises to the lipid droplet. Its subcellular location is the endoplasmic reticulum membrane. It is found in the golgi apparatus. The protein resides in the cytoplasmic vesicle. It localises to the COPI-coated vesicle. Functionally, lipid transferase specifically expressed in hepatocytes, which promotes unilocular lipid droplet formation by mediating lipid droplet fusion. Lipid droplet fusion promotes their enlargement, restricting lipolysis and favoring lipid storage. Localizes on the lipid droplet surface, at focal contact sites between lipid droplets, and mediates atypical lipid droplet fusion by promoting directional net neutral lipid transfer from the smaller to larger lipid droplets. The transfer direction may be driven by the internal pressure difference between the contacting lipid droplet pair. Promotes lipid exchange and lipid droplet fusion in both small and large lipid droplet-containing hepatocytes. In addition to its role in lipid droplet fusion, also involved in cytoplasmic vesicle biogenesis and transport. Required for very-low-density lipoprotein (VLDL) lipidation and maturation. Probably involved in the biogenesis of VLDL transport vesicles by forming a COPII vesicle coat and facilitating the formation of endoplasmic reticulum-derived large vesicles. Also involved in sterol-regulated export of the SCAP-SREBP complex, composed of SCAP, SREBF1/SREBP1 and SREBF2/SREBP2, by promoting loading of SCAP-SREBP into COPII vesicles. May also activate apoptosis. The chain is Lipid transferase CIDEB from Mus musculus (Mouse).